The following is a 360-amino-acid chain: Pyrimidine monooxygenase RutA (360 aa).

FMN contacts are provided by residues 49-50 (IK), N115, E124, 140-141 (RY), and S190.

This sequence belongs to the NtaA/SnaA/DszA monooxygenase family. RutA subfamily.

It catalyses the reaction uracil + FMNH2 + NADH + O2 = (Z)-3-ureidoacrylate + FMN + NAD(+) + H2O + H(+). The catalysed reaction is thymine + FMNH2 + NADH + O2 = (Z)-2-methylureidoacrylate + FMN + NAD(+) + H2O + H(+). Functionally, catalyzes the pyrimidine ring opening between N-3 and C-4 by an unusual flavin hydroperoxide-catalyzed mechanism, adding oxygen atoms in the process to yield ureidoacrylate peracid, that immediately reacts with FMN forming ureidoacrylate and FMN-N(5)-oxide. The FMN-N(5)-oxide reacts spontaneously with NADH to produce FMN. Requires the flavin reductase RutF to regenerate FMN in vivo. The protein is Pyrimidine monooxygenase RutA of Stutzerimonas stutzeri (strain A1501) (Pseudomonas stutzeri).